We begin with the raw amino-acid sequence, 142 residues long: Large ribosomal subunit protein uL13 (142 aa).

It belongs to the universal ribosomal protein uL13 family. In terms of assembly, part of the 50S ribosomal subunit.

In terms of biological role, this protein is one of the early assembly proteins of the 50S ribosomal subunit, although it is not seen to bind rRNA by itself. It is important during the early stages of 50S assembly. The protein is Large ribosomal subunit protein uL13 of Dictyoglomus thermophilum (strain ATCC 35947 / DSM 3960 / H-6-12).